The following is a 460-amino-acid chain: Decaprenylphosphoryl-beta-D-ribose oxidase (460 aa).

One can recognise an FAD-binding PCMH-type domain in the interval 19–193 (TAPTVASVLS…LRATIEMTPT (175 aa)). Residues 52–62 (ARGLGRSYGDN), Gly-116, 121–124 (TVGG), 128–131 (CDIH), Ile-183, and Tyr-414 each bind FAD.

The protein belongs to the DprE1 family. As to quaternary structure, monomer. Interacts with DprE2 to form an epimerase complex.

The protein localises to the periplasm. It catalyses the reaction trans,octa-cis-decaprenylphospho-beta-D-ribofuranose + FAD + H(+) = trans,octa-cis-decaprenylphospho-beta-D-erythro-pentofuranosid-2-ulose + FADH2. It participates in cell wall biogenesis; cell wall polysaccharide biosynthesis. Its activity is regulated as follows. Is inhibited by 8-nitro-benzothiazinones (BTZs) such as BTZ043; BTZs are a new class of antimycobacterial agents that block formation of both cell-wall lipoarabinomannan and arabinogalactan via inhibition of decaprenyl-phospho-arabinose (DPA) synthesis. BTZs are suicide inhibitors that act via covalent modification of DprE1; the essential nitro group of these compounds is reduced by DprE1 to a nitroso group, which then specifically reacts with Cys-386 of DprE1 to form an irreversible semimercaptal adduct. Other compounds with diverse scaffolds (dinitrobenzamides and nitrobenzoquinoxalines) also act as covalent DprE1 inhibitors. Functionally, component of the DprE1-DprE2 complex that catalyzes the 2-step epimerization of decaprenyl-phospho-ribose (DPR) to decaprenyl-phospho-arabinose (DPA), a key precursor that serves as the arabinose donor required for the synthesis of cell-wall arabinans. DprE1 catalyzes the first step of epimerization, namely FAD-dependent oxidation of the C2' hydroxyl of DPR to yield the keto intermediate decaprenyl-phospho-2'-keto-D-arabinose (DPX). The intermediate DPX is then transferred to DprE2 subunit of the epimerase complex, most probably through a 'substrate channel' at the interface of DprE1-DprE2 complex. Can also use farnesyl-phosphoryl-beta-D-ribofuranose (FPR) as substrate in vitro. Appears to be essential for the growth of M.smegmatis. The chain is Decaprenylphosphoryl-beta-D-ribose oxidase from Mycolicibacterium smegmatis (strain ATCC 700084 / mc(2)155) (Mycobacterium smegmatis).